We begin with the raw amino-acid sequence, 65 residues long: Small ribosomal subunit protein bS21 (65 aa).

Positions 45–65 (GRLKRSRSRRRAQRANEERNS) are disordered. Positions 48-57 (KRSRSRRRAQ) are enriched in basic residues.

Belongs to the bacterial ribosomal protein bS21 family.

This is Small ribosomal subunit protein bS21 from Pelodictyon phaeoclathratiforme (strain DSM 5477 / BU-1).